Consider the following 161-residue polypeptide: Endoribonuclease YbeY (161 aa).

His-127, His-131, and His-137 together coordinate Zn(2+).

The protein belongs to the endoribonuclease YbeY family. It depends on Zn(2+) as a cofactor.

The protein localises to the cytoplasm. Its function is as follows. Single strand-specific metallo-endoribonuclease involved in late-stage 70S ribosome quality control and in maturation of the 3' terminus of the 16S rRNA. This Listeria monocytogenes serotype 4b (strain CLIP80459) protein is Endoribonuclease YbeY.